We begin with the raw amino-acid sequence, 297 residues long: Flavin-dependent thymidylate synthase (297 aa).

The region spanning 41–251 is the ThyX domain; that stretch reads GFVRLVDYMG…PLTYAAFVEY (211 aa). Residues threonine 87, 110–112, and glutamate 118 contribute to the FAD site; that span reads RHR. Residues 107 to 110, 118 to 122, and arginine 190 contribute to the dUMP site; these read QWVR and EYSAR. Residues 110-120 carry the ThyX motif motif; the sequence is RHRTANVNEYS. Residues 206 to 208 and histidine 212 each bind FAD; that span reads DLH. Arginine 217 serves as a coordination point for dUMP. The active-site Involved in ionization of N3 of dUMP, leading to its activation is arginine 217.

Belongs to the thymidylate synthase ThyX family. In terms of assembly, homotetramer. Requires FAD as cofactor.

It catalyses the reaction dUMP + (6R)-5,10-methylene-5,6,7,8-tetrahydrofolate + NADPH + H(+) = dTMP + (6S)-5,6,7,8-tetrahydrofolate + NADP(+). The protein operates within pyrimidine metabolism; dTTP biosynthesis. In terms of biological role, catalyzes the reductive methylation of 2'-deoxyuridine-5'-monophosphate (dUMP) to 2'-deoxythymidine-5'-monophosphate (dTMP) while utilizing 5,10-methylenetetrahydrofolate (mTHF) as the methyl donor, and NADPH and FADH(2) as the reductant. This is Flavin-dependent thymidylate synthase from Ehrlichia ruminantium (strain Gardel).